Consider the following 316-residue polypeptide: 4-hydroxy-3-methylbut-2-enyl diphosphate reductase (316 aa).

Cys-12 contributes to the [4Fe-4S] cluster binding site. Positions 41 and 74 each coordinate (2E)-4-hydroxy-3-methylbut-2-enyl diphosphate. Dimethylallyl diphosphate contacts are provided by His-41 and His-74. Positions 41 and 74 each coordinate isopentenyl diphosphate. Cys-96 is a [4Fe-4S] cluster binding site. His-124 contributes to the (2E)-4-hydroxy-3-methylbut-2-enyl diphosphate binding site. His-124 contributes to the dimethylallyl diphosphate binding site. Position 124 (His-124) interacts with isopentenyl diphosphate. The Proton donor role is filled by Glu-126. Residue Thr-169 participates in (2E)-4-hydroxy-3-methylbut-2-enyl diphosphate binding. Residue Cys-199 coordinates [4Fe-4S] cluster. The (2E)-4-hydroxy-3-methylbut-2-enyl diphosphate site is built by Ser-227, Ser-228, Asn-229, and Ser-271. Dimethylallyl diphosphate is bound by residues Ser-227, Ser-228, Asn-229, and Ser-271. Positions 227, 228, 229, and 271 each coordinate isopentenyl diphosphate.

This sequence belongs to the IspH family. The cofactor is [4Fe-4S] cluster.

It carries out the reaction isopentenyl diphosphate + 2 oxidized [2Fe-2S]-[ferredoxin] + H2O = (2E)-4-hydroxy-3-methylbut-2-enyl diphosphate + 2 reduced [2Fe-2S]-[ferredoxin] + 2 H(+). The catalysed reaction is dimethylallyl diphosphate + 2 oxidized [2Fe-2S]-[ferredoxin] + H2O = (2E)-4-hydroxy-3-methylbut-2-enyl diphosphate + 2 reduced [2Fe-2S]-[ferredoxin] + 2 H(+). Its pathway is isoprenoid biosynthesis; dimethylallyl diphosphate biosynthesis; dimethylallyl diphosphate from (2E)-4-hydroxy-3-methylbutenyl diphosphate: step 1/1. The protein operates within isoprenoid biosynthesis; isopentenyl diphosphate biosynthesis via DXP pathway; isopentenyl diphosphate from 1-deoxy-D-xylulose 5-phosphate: step 6/6. In terms of biological role, catalyzes the conversion of 1-hydroxy-2-methyl-2-(E)-butenyl 4-diphosphate (HMBPP) into a mixture of isopentenyl diphosphate (IPP) and dimethylallyl diphosphate (DMAPP). Acts in the terminal step of the DOXP/MEP pathway for isoprenoid precursor biosynthesis. The sequence is that of 4-hydroxy-3-methylbut-2-enyl diphosphate reductase from Xanthomonas campestris pv. campestris (strain 8004).